The sequence spans 155 residues: Transcriptional repressor NrdR (155 aa).

Residues 3–34 fold into a zinc finger; sequence CPFCGNIDTQVKDSRPAEDHVSIRRRRFCPAC. In terms of domain architecture, ATP-cone spans 49–139; that stretch reads LVVIKSSGKR…VYKNFQAADD (91 aa).

The protein belongs to the NrdR family. Zn(2+) serves as cofactor.

Its function is as follows. Negatively regulates transcription of bacterial ribonucleotide reductase nrd genes and operons by binding to NrdR-boxes. This Cereibacter sphaeroides (strain ATCC 17025 / ATH 2.4.3) (Rhodobacter sphaeroides) protein is Transcriptional repressor NrdR.